A 404-amino-acid chain; its full sequence is tRNA/tmRNA (uracil-C(5))-methyltransferase (404 aa).

Positions 218, 251, 256, 272, and 332 each coordinate S-adenosyl-L-methionine. The Nucleophile role is filled by C358. E392 functions as the Proton acceptor in the catalytic mechanism.

Belongs to the class I-like SAM-binding methyltransferase superfamily. RNA M5U methyltransferase family. TrmA subfamily.

It catalyses the reaction uridine(54) in tRNA + S-adenosyl-L-methionine = 5-methyluridine(54) in tRNA + S-adenosyl-L-homocysteine + H(+). The catalysed reaction is uridine(341) in tmRNA + S-adenosyl-L-methionine = 5-methyluridine(341) in tmRNA + S-adenosyl-L-homocysteine + H(+). In terms of biological role, dual-specificity methyltransferase that catalyzes the formation of 5-methyluridine at position 54 (m5U54) in all tRNAs, and that of position 341 (m5U341) in tmRNA (transfer-mRNA). The protein is tRNA/tmRNA (uracil-C(5))-methyltransferase of Helicobacter hepaticus (strain ATCC 51449 / 3B1).